We begin with the raw amino-acid sequence, 1233 residues long: Capping protein-inhibiting regulator of actin dynamics (1233 aa).

3 positions are modified to phosphoserine: S7, S28, and S132. Disordered stretches follow at residues 92–136 (AENK…SAGT), 157–224 (AKHK…RRRQ), and 269–527 (LLEE…WQEV). Basic residues predominate over residues 157–176 (AKHKLAVKPKKQRVSKKHRR). Basic and acidic residues-rich tracts occupy residues 200-211 (PGEDKPTWHEEE), 282-293 (EAERAPREEQQR), 302-322 (DAER…ERRR), and 329-362 (AEER…KRQE). The segment at 321–472 (RRLQAQAQAE…EQQGRSGDFQ (152 aa)) is required for interaction with actin-capping proteins. 2 stretches are compositionally biased toward acidic residues: residues 363-376 (EEEA…EQQE) and 397-407 (EEEDLGEEEEE). At S420 the chain carries Phosphoserine. 2 stretches are compositionally biased toward basic and acidic residues: residues 432–447 (DQER…HSEE) and 505–527 (VERK…WQEV). A Phosphoserine modification is found at S556. The residue at position 559 (T559) is a Phosphothreonine. Disordered stretches follow at residues 560-586 (PAKD…HALP), 629-788 (HAEA…TTEG), 815-1082 (EFTT…TEKV), and 1097-1186 (QKGF…ISDS). The segment covering 677 to 707 (KNAESDPRSSERDQLRPGDESTPRGRCDSRG) has biased composition (basic and acidic residues). The segment covering 732–742 (GTETSKQSTEA) has biased composition (polar residues). Positions 768-783 (ELGKGPEKSEMHREPA) are enriched in basic and acidic residues. Composition is skewed to polar residues over residues 815 to 825 (EFTTSSDSETA) and 852 to 863 (TNYSLRFNCDQQ). Residues 876–889 (GDSADAGPPAAGSA) are compositionally biased toward low complexity. Residues 908–921 (QERKQAPSTRRDSA) are compositionally biased toward basic and acidic residues. Residues 956–967 (PLAQKPALAPKP) are compositionally biased toward low complexity. At T971 the chain carries Phosphothreonine. 2 positions are modified to phosphoserine: S975 and S1017. The segment covering 994–1040 (GRPDPEPSEPSKEDQESSDRRPPSPPGPEERKGQKRDEEEEATERKP) has biased composition (basic and acidic residues). Positions 1047–1057 (ATQQEKPSQTP) are enriched in polar residues. Basic and acidic residues-rich tracts occupy residues 1059 to 1082 (AGRK…TEKV) and 1099 to 1124 (GFRE…KLSK). Over residues 1127–1139 (VSVSVQPGSSSVS) the composition is skewed to low complexity. Positions 1151–1170 (PEEKRPETAVSRLERREQLK) are enriched in basic and acidic residues. Residues 1174–1183 (TLPTSVTVEI) are compositionally biased toward polar residues.

As to quaternary structure, directly interacts with actin-capping proteins CAPZA1, CAPZA2 and CAPZB; this interaction decreases the binding of capping proteins to actin. In terms of tissue distribution, expressed in intestinal epithelial cells (at protein level).

It is found in the cytoplasm. The protein localises to the cytosol. Involved in epithelial cell integrity by acting on the maintenance of the actin cytoskeleton. Positively regulates the actin polymerization, by inhibiting the interaction of actin-capping proteins with actin. The sequence is that of Capping protein-inhibiting regulator of actin dynamics from Homo sapiens (Human).